Reading from the N-terminus, the 1683-residue chain is Genome polyprotein (1683 aa).

Topologically, residues 1–445 (MRCIGISNRD…LHQVFGAIYG (445 aa)) are extracellular. 4 disulfides stabilise this stretch: Cys3/Cys30, Cys60/Cys121, Cys74/Cys105, and Cys92/Cys116. N-linked (GlcNAc...) asparagine; by host glycosylation occurs at Asn67. Residues 98-111 (DRGWGNGCGLFGKG) form a fusion peptide region. Asn153 carries an N-linked (GlcNAc...) asparagine; by host glycan. 2 disulfide bridges follow: Cys185-Cys285 and Cys302-Cys333. The chain crosses the membrane as a helical span at residues 446–466 (AAFSGVSWTMKILIGVIITWI). At 467 to 472 (GMNSRS) the chain is on the cytoplasmic side. The helical transmembrane segment at 473-493 (TSLSVSLVLVGIVTLYLGVMV) threads the bilayer. Over 494-915 (QADSGCVVSW…MVGATMTDDI (422 aa)) the chain is Extracellular. Disulfide bonds link Cys499-Cys510, Cys550-Cys638, Cys674-Cys718, Cys775-Cys824, Cys786-Cys808, and Cys807-Cys811. A glycan (N-linked (GlcNAc...) asparagine; by host) is linked at Asn702. The helical transmembrane segment at 916-940 (GMGVTYLALLAAFRVRPTFAAGLLL) threads the bilayer. The Cytoplasmic portion of the chain corresponds to 941 to 946 (RKLTSK). The chain crosses the membrane as a helical span at residues 947-965 (ELMMTTIGIVLLSQSSIPE). Over 966–989 (TILELTDALALGMMVLKMVRNMEK) the chain is Lumenal. Residues 990 to 1010 (YQLAVTIMAILCVPNAVILQN) form a helical membrane-spanning segment. Ala1011 is a topological domain (cytoplasmic). A helical transmembrane segment spans residues 1012–1030 (WKVSCTILAVVSVSPLLLT). Topologically, residues 1031–1037 (SSQQKAD) are lumenal. The chain crosses the membrane as a helical span at residues 1038-1058 (WIPLALTIKGLNPTAIFLTTL). Residues 1059 to 1683 (SRTSKKRAGV…EFKEFAAGRK (625 aa)) are Cytoplasmic-facing. One can recognise a Peptidase S7 domain in the interval 1066–1243 (AGVLWDVPSP…EKSIEDNPEI (178 aa)). Catalysis depends on charge relay system; for serine protease NS3 activity residues His1116, Asp1140, and Ser1200. One can recognise a Helicase ATP-binding domain in the interval 1245–1401 (DDIFRKRRLT…QSNAPIMDEE (157 aa)). Positions 1249–1252 (RKRR) are important for RNA-binding. Residue 1258–1265 (LHPGAGKT) participates in ATP binding. The DEAH box motif lies at 1349–1352 (DEAH). Positions 1411–1582 (SGHEWVTDFK…IFEPEREKVD (172 aa)) constitute a Helicase C-terminal domain.

In terms of assembly, capsid protein C: Homodimer. Interacts (via N-terminus) with host EXOC1 (via C-terminus); this interaction results in EXOC1 degradation through the proteasome degradation pathway. Protein prM: Forms heterodimers with envelope protein E in the endoplasmic reticulum and Golgi. As to quaternary structure, homodimer; in the endoplasmic reticulum and Golgi. Interacts with protein prM. Interacts with non-structural protein 1. Homodimer; Homohexamer when secreted. Interacts with envelope protein E. In terms of assembly, interacts (via N-terminus) with serine protease NS3. Non-structural protein 2B: Forms a heterodimer with serine protease NS3. May form homooligomers. As to quaternary structure, forms a heterodimer with NS2B. Interacts with NS4B. Interacts with unphosphorylated RNA-directed RNA polymerase NS5; this interaction stimulates RNA-directed RNA polymerase NS5 guanylyltransferase activity. Interacts with host SHFL. Post-translationally, specific enzymatic cleavages in vivo yield mature proteins. Cleavages in the lumen of endoplasmic reticulum are performed by host signal peptidase, wereas cleavages in the cytoplasmic side are performed by the Serine protease NS3. Signal cleavage at the 2K-4B site requires a prior NS3 protease-mediated cleavage at the 4A-2K site. N-glycosylated. The excreted form is glycosylated and this is required for efficient secretion of the protein from infected cells. In terms of processing, N-glycosylated. Post-translationally, specific enzymatic cleavages in vivo yield mature proteins. Cleavages in the lumen of endoplasmic reticulum are performed by host signal peptidase, wereas cleavages in the cytoplasmic side are performed by serine protease NS3. Signal cleavage at the 2K-4B site requires a prior NS3 protease-mediated cleavage at the 4A-2K site.

The protein localises to the virion membrane. It is found in the host endoplasmic reticulum membrane. Its subcellular location is the secreted. It carries out the reaction Selective hydrolysis of -Xaa-Xaa-|-Yaa- bonds in which each of the Xaa can be either Arg or Lys and Yaa can be either Ser or Ala.. The catalysed reaction is a ribonucleoside 5'-triphosphate + H2O = a ribonucleoside 5'-diphosphate + phosphate + H(+). It catalyses the reaction ATP + H2O = ADP + phosphate + H(+). Its function is as follows. Binds to host cell surface receptor and mediates fusion between viral and cellular membranes. Envelope protein is synthesized in the endoplasmic reticulum in the form of heterodimer with protein prM. They play a role in virion budding in the ER, and the newly formed immature particle is covered with 60 spikes composed of heterodimer between precursor prM and envelope protein E. The virion is transported to the Golgi apparatus where the low pH causes dissociation of PrM-E heterodimers and formation of E homodimers. prM-E cleavage is inefficient, and many virions are only partially matured. These uncleaved prM would play a role in immune evasion. Involved in immune evasion, pathogenesis and viral replication. Once cleaved off the polyprotein, is targeted to three destinations: the viral replication cycle, the plasma membrane and the extracellular compartment. Essential for viral replication. Required for formation of the replication complex and recruitment of other non-structural proteins to the ER-derived membrane structures. Excreted as a hexameric lipoparticle that plays a role against host immune response. Antagonizing the complement function. Binds to the host macrophages and dendritic cells. Inhibits signal transduction originating from Toll-like receptor 3 (TLR3). Functionally, disrupts the host endothelial glycocalyx layer of host pulmonary microvascular endothelial cells, inducing degradation of sialic acid and shedding of heparan sulfate proteoglycans. NS1 induces expression of sialidases, heparanase, and activates cathepsin L, which activates heparanase via enzymatic cleavage. These effects are probably linked to the endothelial hyperpermeability observed in severe dengue disease. In terms of biological role, component of the viral RNA replication complex that functions in virion assembly and antagonizes the host immune response. Its function is as follows. Serine protease subunit NS2B: Required cofactor for the serine protease function of NS3. May have membrane-destabilizing activity and form viroporins. Displays three enzymatic activities: serine protease, NTPase and RNA helicase. NS3 serine protease, in association with NS2B, performs its autocleavage and cleaves the polyprotein at dibasic sites in the cytoplasm: C-prM, NS2A-NS2B, NS2B-NS3, NS3-NS4A, NS4A-2K and NS4B-NS5. NS3 RNA helicase binds RNA and unwinds dsRNA in the 3' to 5' direction. The protein is Genome polyprotein of Aedimorphus (Red guenon).